Consider the following 434-residue polypeptide: RNA polymerase II holoenzyme cyclin-like subunit (434 aa).

Residues Glu23–Leu155 enclose the Cyclin N-terminal domain. Residues Gly248–Thr278 show a composition bias toward low complexity. Disordered regions lie at residues Gly248–Glu292, Leu301–Asn320, and Gln330–Ser362. Residues Gln330–Gly359 show a composition bias toward low complexity.

The protein belongs to the cyclin family. Cyclin C subfamily. As to quaternary structure, component of the SRB8-11 complex, a regulatory module of the Mediator complex.

It localises to the nucleus. Component of the SRB8-11 complex. The SRB8-11 complex is a regulatory module of the Mediator complex which is itself involved in regulation of basal and activated RNA polymerase II-dependent transcription. The SRB8-11 complex may be involved in the transcriptional repression of a subset of genes regulated by Mediator. It may inhibit the association of the Mediator complex with RNA polymerase II to form the holoenzyme complex. The SRB8-11 complex phosphorylates the C-terminal domain (CTD) of the largest subunit of RNA polymerase II. The polypeptide is RNA polymerase II holoenzyme cyclin-like subunit (SSN8) (Candida albicans (strain SC5314 / ATCC MYA-2876) (Yeast)).